The sequence spans 186 residues: Secreted chorismate mutase (186 aa).

An N-terminal signal peptide occupies residues 1–30 (MQPTHTLTRLTVIGKLIIASSFFLSLAVQA). In terms of domain architecture, Chorismate mutase spans 31–107 (QQCGQTAPLI…AAKAIQYRYR (77 aa)). Cys-33 and Cys-148 are joined by a disulfide. Substrate-binding positions include Arg-43, Lys-54, Asp-63, 99-103 (AKAIQ), and Arg-127.

Homodimer.

The protein resides in the periplasm. The catalysed reaction is chorismate = prephenate. The protein operates within metabolic intermediate biosynthesis; prephenate biosynthesis; prephenate from chorismate: step 1/1. Catalyzes the Claisen rearrangement of chorismate to prephenate. May play some role in the pathogenicity. This is Secreted chorismate mutase (pheA2) from Yersinia pestis.